Here is a 561-residue protein sequence, read N- to C-terminus: Dihydroxy-acid dehydratase (561 aa).

C50 serves as a coordination point for [2Fe-2S] cluster. Position 82 (D82) interacts with Mg(2+). C123 contributes to the [2Fe-2S] cluster binding site. Residues D124 and K125 each contribute to the Mg(2+) site. Residue K125 is modified to N6-carboxylysine. C195 contacts [2Fe-2S] cluster. E447 lines the Mg(2+) pocket. S473 functions as the Proton acceptor in the catalytic mechanism.

It belongs to the IlvD/Edd family. As to quaternary structure, homodimer. Requires [2Fe-2S] cluster as cofactor. Mg(2+) serves as cofactor.

The enzyme catalyses (2R)-2,3-dihydroxy-3-methylbutanoate = 3-methyl-2-oxobutanoate + H2O. It catalyses the reaction (2R,3R)-2,3-dihydroxy-3-methylpentanoate = (S)-3-methyl-2-oxopentanoate + H2O. The protein operates within amino-acid biosynthesis; L-isoleucine biosynthesis; L-isoleucine from 2-oxobutanoate: step 3/4. It functions in the pathway amino-acid biosynthesis; L-valine biosynthesis; L-valine from pyruvate: step 3/4. Functionally, functions in the biosynthesis of branched-chain amino acids. Catalyzes the dehydration of (2R,3R)-2,3-dihydroxy-3-methylpentanoate (2,3-dihydroxy-3-methylvalerate) into 2-oxo-3-methylpentanoate (2-oxo-3-methylvalerate) and of (2R)-2,3-dihydroxy-3-methylbutanoate (2,3-dihydroxyisovalerate) into 2-oxo-3-methylbutanoate (2-oxoisovalerate), the penultimate precursor to L-isoleucine and L-valine, respectively. This Synechocystis sp. (strain ATCC 27184 / PCC 6803 / Kazusa) protein is Dihydroxy-acid dehydratase.